Here is a 74-residue protein sequence, read N- to C-terminus: Exodeoxyribonuclease 7 small subunit (74 aa).

This sequence belongs to the XseB family. As to quaternary structure, heterooligomer composed of large and small subunits.

The protein localises to the cytoplasm. The enzyme catalyses Exonucleolytic cleavage in either 5'- to 3'- or 3'- to 5'-direction to yield nucleoside 5'-phosphates.. Bidirectionally degrades single-stranded DNA into large acid-insoluble oligonucleotides, which are then degraded further into small acid-soluble oligonucleotides. In Actinobacillus pleuropneumoniae serotype 5b (strain L20), this protein is Exodeoxyribonuclease 7 small subunit.